Reading from the N-terminus, the 417-residue chain is Divinyl chlorophyllide a 8-vinyl-reductase, chloroplastic (417 aa).

A chloroplast-targeting transit peptide spans 1–49 (MSLCSSFNVFASYSPKPKTIFKDSKFISQFQVKSSPLASTFHTNESSTS).

As to expression, highly expressed in leaves, stems and flower buds. Detected in roots.

The protein resides in the plastid. Its subcellular location is the chloroplast. It carries out the reaction protochlorophyllide a + NADP(+) = 3,8-divinyl protochlorophyllide a + NADPH + H(+). Its pathway is porphyrin-containing compound metabolism; chlorophyll biosynthesis. In terms of biological role, catalyzes the conversion of divinyl chlorophyllide to monovinyl chlorophyllide. Reduces the 8-vinyl group of the tetrapyrrole to an ethyl group using NADPH as the reductant. The best substrate is (3,8-divinyl)-chlorophyllide a (DV-Chlidea). Very low activity with (3,8-divinyl)-protochlorophyllide a (DV-Pchlidea) and (3,8-divinyl)-magnesium-protoporphyrin IX monomethyl ester (DV-MPE). No activity with (3,8-divinyl)-chlorophyllide b (DV-Chlideb), (3,8-divinyl)-magnesium-protoporphyrin IX (DV-Mg-Proto) and either (3,8-divinyl)-chlorophyll a (DV-Chla) or b (DV-Chlb). The protein is Divinyl chlorophyllide a 8-vinyl-reductase, chloroplastic (DVR) of Arabidopsis thaliana (Mouse-ear cress).